Reading from the N-terminus, the 79-residue chain is Cytochrome c oxidase subunit 7A1, mitochondrial (79 aa).

The transit peptide at 1-21 (MQALRVSQALIRSFSSTARNR) directs the protein to the mitochondrion. The Mitochondrial matrix segment spans residues 22–46 (FQNRVREKQKLFQEDNDIPLYLKGG). Residues 47 to 75 (IVDNILYRVTMTLCLGGTVYSLYSLGWAS) form a helical membrane-spanning segment. The Mitochondrial intermembrane portion of the chain corresponds to 76 to 79 (FPRN).

The protein belongs to the cytochrome c oxidase VIIa family. In terms of assembly, component of the complex IV (CIV, cytochrome c oxidase), a multisubunit enzyme composed of 14 subunits. The complex is composed of a catalytic core of 3 subunits MT-CO1, MT-CO2 and MT-CO3, encoded in the mitochondrial DNA, and 11 supernumerary subunits COX4I1 (or COX4I2), COX5A, COX5B, COX6A2 (or COX6A1), COX6B1 (or COX6B2), COX6C, COX7A1 (or COX7A2), COX7B, COX7C, COX8B and NDUFA4, which are encoded in the nuclear genome. The complex exists as a monomer or a dimer and forms supercomplexes (SCs) in the inner mitochondrial membrane with NADH-ubiquinone oxidoreductase (complex I, CI) and ubiquinol-cytochrome c oxidoreductase (cytochrome b-c1 complex, complex III, CIII), resulting in different assemblies (supercomplex SCI(1)III(2)IV(1) and megacomplex MCI(2)III(2)IV(2)).

The protein resides in the mitochondrion inner membrane. The protein operates within energy metabolism; oxidative phosphorylation. In terms of biological role, component of the mitochondrial respiratory complex IV (CIV, also named cytochrome c oxidase complex), the last enzyme in the mitochondrial electron transport chain which drives oxidative phosphorylation. The CIV complex is the component of the respiratory chain that catalyzes the reduction of oxygen to water. Acts as an assembly factor that specifically drives the homodimerization of CIV complexes, mediating the formation of mitochondrial respiratory supercomplexes (respirasomes) containing two CIV: supercomplxes with two molecules of CIV show improved activity. Despite being highly expressed in brown adipose tissue, not required for thermogenesis. The sequence is that of Cytochrome c oxidase subunit 7A1, mitochondrial (COX7A1) from Homo sapiens (Human).